The primary structure comprises 473 residues: Ras-GEF domain-containing family member 1B (473 aa).

The N-terminal Ras-GEF domain maps to 34-164; sequence HDNNLLSGSL…QMMQCLIRKL (131 aa). Positions 204–452 constitute a Ras-GEF domain; that stretch reads NDPYTLAQQL…LYLASYESEG (249 aa).

In terms of assembly, interacts with Ras family proteins. Interacts with CCDC124 during cytokinesis.

The protein localises to the early endosome. It is found in the late endosome. Its subcellular location is the midbody. Functionally, guanine nucleotide exchange factor (GEF) with specificity for RAP2A, it doesn't seems to activate other Ras family proteins (in vitro). This is Ras-GEF domain-containing family member 1B (RASGEF1B) from Homo sapiens (Human).